A 129-amino-acid chain; its full sequence is Follitropin subunit beta (129 aa).

The first 18 residues, 1–18 (MKSIQFCFFFCCWKAICC), serve as a signal peptide directing secretion. Intrachain disulfides connect cysteine 21–cysteine 69, cysteine 35–cysteine 84, cysteine 38–cysteine 122, cysteine 46–cysteine 100, cysteine 50–cysteine 102, and cysteine 105–cysteine 112. Residues asparagine 25 and asparagine 42 are each glycosylated (N-linked (GlcNAc...) asparagine).

Belongs to the glycoprotein hormones subunit beta family. As to quaternary structure, heterodimer. The active follitropin is a heterodimer composed of an alpha chain/CGA shared with other hormones and a unique beta chain/FSHB shown here.

It localises to the secreted. In terms of biological role, together with the alpha chain CGA constitutes follitropin, the follicle-stimulating hormone, and provides its biological specificity to the hormone heterodimer. Binds FSHR, a G protein-coupled receptor, on target cells to activate downstream signaling pathways. Follitropin is involved in follicle development and spermatogenesis in reproductive organs. The protein is Follitropin subunit beta (FSHB) of Cavia porcellus (Guinea pig).